The chain runs to 576 residues: Potassium-transporting ATPase potassium-binding subunit (576 aa).

12 helical membrane-spanning segments follow: residues 3–23, 68–88, 137–157, 179–199, 267–287, 294–314, 339–359, 369–389, 391–411, 430–450, 495–515, and 537–557; these read IFLD…ISPI, LYAL…TLLF, GLAL…LVLI, ILYV…SQGV, FEAF…GYMI, WFLY…QYYF, FGIG…CGAV, LGGL…GGVG, GLYG…LMIG, VVIT…ALYT, ITTG…VFYM, and LVFG…TFLP.

It belongs to the KdpA family. In terms of assembly, the system is composed of three essential subunits: KdpA, KdpB and KdpC.

The protein resides in the cell inner membrane. In terms of biological role, part of the high-affinity ATP-driven potassium transport (or Kdp) system, which catalyzes the hydrolysis of ATP coupled with the electrogenic transport of potassium into the cytoplasm. This subunit binds the periplasmic potassium ions and delivers the ions to the membrane domain of KdpB through an intramembrane tunnel. This Hydrogenobaculum sp. (strain Y04AAS1) protein is Potassium-transporting ATPase potassium-binding subunit.